We begin with the raw amino-acid sequence, 61 residues long: Photosystem II reaction center protein K (61 aa).

Positions 1–24 (MPNIFSLICICLNSALQPSGFFFA) are excised as a propeptide. A helical membrane pass occupies residues 36 to 56 (IVDFMPVIPVLFFLLAFVWQA).

It belongs to the PsbK family. In terms of assembly, PSII is composed of 1 copy each of membrane proteins PsbA, PsbB, PsbC, PsbD, PsbE, PsbF, PsbH, PsbI, PsbJ, PsbK, PsbL, PsbM, PsbT, PsbX, PsbY, PsbZ, Psb30/Ycf12, at least 3 peripheral proteins of the oxygen-evolving complex and a large number of cofactors. It forms dimeric complexes.

It is found in the plastid. The protein resides in the chloroplast thylakoid membrane. Its function is as follows. One of the components of the core complex of photosystem II (PSII). PSII is a light-driven water:plastoquinone oxidoreductase that uses light energy to abstract electrons from H(2)O, generating O(2) and a proton gradient subsequently used for ATP formation. It consists of a core antenna complex that captures photons, and an electron transfer chain that converts photonic excitation into a charge separation. This chain is Photosystem II reaction center protein K, found in Nymphaea alba (White water-lily).